Reading from the N-terminus, the 1184-residue chain is Nucleolar protein 6 (1184 aa).

Over residues 1-10 the composition is skewed to basic and acidic residues; sequence MGRIKEKESK. 2 disordered regions span residues 1-42 and 1133-1184; these read MGRI…NRVP and REQR…NALC.

Belongs to the NRAP family. In terms of assembly, part of the small subunit (SSU) processome, composed of more than 70 proteins and the RNA chaperone small nucleolar RNA (snoRNA) U3.

Its subcellular location is the nucleus. It localises to the nucleolus. It is found in the chromosome. In terms of biological role, part of the small subunit (SSU) processome, first precursor of the small eukaryotic ribosomal subunit. During the assembly of the SSU processome in the nucleolus, many ribosome biogenesis factors, an RNA chaperone and ribosomal proteins associate with the nascent pre-rRNA and work in concert to generate RNA folding, modifications, rearrangements and cleavage as well as targeted degradation of pre-ribosomal RNA by the RNA exosome. The protein is Nucleolar protein 6 of Drosophila virilis (Fruit fly).